The chain runs to 128 residues: Large ribosomal subunit protein bL17 (128 aa).

The protein belongs to the bacterial ribosomal protein bL17 family. Part of the 50S ribosomal subunit. Contacts protein L32.

The polypeptide is Large ribosomal subunit protein bL17 (Pseudomonas fluorescens (strain ATCC BAA-477 / NRRL B-23932 / Pf-5)).